Consider the following 529-residue polypeptide: Variant surface glycoprotein MITAT 1.6 (529 aa).

A signal peptide spans 1–24 (MAVHRALAAYAISLYVLLPRKSGA). 2 disulfides stabilise this stretch: Cys-39/Cys-170 and Cys-147/Cys-214. N-linked (GlcNAc...) (high mannose) asparagine glycosylation is present at Asn-456. A lipid anchor (GPI-anchor amidated aspartate) is attached at Asp-506. Residues 507–529 (SSILVTKKFALTVVSAAFVALLF) constitute a propeptide, removed in mature form.

In terms of processing, N-glycosylated; glycan is composed of 6 to 9 mannose residues.

It localises to the cell membrane. Functionally, VSG forms a coat on the surface of the parasite. The trypanosome evades the immune response of the host by expressing a series of antigenically distinct VSGs from an estimated 1000 VSG genes. This chain is Variant surface glycoprotein MITAT 1.6, found in Trypanosoma brucei brucei.